Here is a 335-residue protein sequence, read N- to C-terminus: Biotin synthase (335 aa).

The segment at 1-20 is disordered; the sequence is MVSVGTQSHSGRDQAEQNPS. One can recognise a Radical SAM core domain in the interval 59-284; it reads GHLQKSSLLS…MMPQSMVRLS (226 aa). [4Fe-4S] cluster contacts are provided by Cys-74, Cys-78, and Cys-81. Residues Cys-118, Cys-150, Cys-210, and Arg-282 each coordinate [2Fe-2S] cluster.

Belongs to the radical SAM superfamily. Biotin synthase family. In terms of assembly, homodimer. The cofactor is [4Fe-4S] cluster. [2Fe-2S] cluster is required as a cofactor.

The catalysed reaction is (4R,5S)-dethiobiotin + (sulfur carrier)-SH + 2 reduced [2Fe-2S]-[ferredoxin] + 2 S-adenosyl-L-methionine = (sulfur carrier)-H + biotin + 2 5'-deoxyadenosine + 2 L-methionine + 2 oxidized [2Fe-2S]-[ferredoxin]. Its pathway is cofactor biosynthesis; biotin biosynthesis; biotin from 7,8-diaminononanoate: step 2/2. Functionally, catalyzes the conversion of dethiobiotin (DTB) to biotin by the insertion of a sulfur atom into dethiobiotin via a radical-based mechanism. The sequence is that of Biotin synthase from Zymomonas mobilis subsp. mobilis (strain ATCC 31821 / ZM4 / CP4).